Reading from the N-terminus, the 882-residue chain is Alanine--tRNA ligase (882 aa).

4 residues coordinate Zn(2+): His-571, His-575, Cys-673, and His-677.

The protein belongs to the class-II aminoacyl-tRNA synthetase family. It depends on Zn(2+) as a cofactor.

The protein localises to the cytoplasm. It catalyses the reaction tRNA(Ala) + L-alanine + ATP = L-alanyl-tRNA(Ala) + AMP + diphosphate. Catalyzes the attachment of alanine to tRNA(Ala) in a two-step reaction: alanine is first activated by ATP to form Ala-AMP and then transferred to the acceptor end of tRNA(Ala). Also edits incorrectly charged Ser-tRNA(Ala) and Gly-tRNA(Ala) via its editing domain. The protein is Alanine--tRNA ligase of Stenotrophomonas maltophilia (strain K279a).